The chain runs to 880 residues: Protein translocase subunit SecA (880 aa).

Residues glutamine 87, 105-109 (GEGKT), and aspartate 501 contribute to the ATP site. Zn(2+) is bound by residues cysteine 864, cysteine 866, cysteine 875, and histidine 876.

This sequence belongs to the SecA family. As to quaternary structure, monomer and homodimer. Part of the essential Sec protein translocation apparatus which comprises SecA, SecYEG and auxiliary proteins SecDF-YajC and YidC. The cofactor is Zn(2+).

It is found in the cell inner membrane. The protein resides in the cytoplasm. It catalyses the reaction ATP + H2O + cellular proteinSide 1 = ADP + phosphate + cellular proteinSide 2.. Its function is as follows. Part of the Sec protein translocase complex. Interacts with the SecYEG preprotein conducting channel. Has a central role in coupling the hydrolysis of ATP to the transfer of proteins into and across the cell membrane, serving both as a receptor for the preprotein-SecB complex and as an ATP-driven molecular motor driving the stepwise translocation of polypeptide chains across the membrane. The sequence is that of Protein translocase subunit SecA from Orientia tsutsugamushi (strain Boryong) (Rickettsia tsutsugamushi).